A 77-amino-acid chain; its full sequence is Acyl carrier protein (77 aa).

The region spanning 2 to 77 is the Carrier domain; it reads SSIDKRIKEI…DAIDYITDHT (76 aa). Position 37 is an O-(pantetheine 4'-phosphoryl)serine (serine 37).

Belongs to the acyl carrier protein (ACP) family. 4'-phosphopantetheine is transferred from CoA to a specific serine of apo-ACP by AcpS. This modification is essential for activity because fatty acids are bound in thioester linkage to the sulfhydryl of the prosthetic group.

The protein resides in the cytoplasm. Its pathway is lipid metabolism; fatty acid biosynthesis. Functionally, carrier of the growing fatty acid chain in fatty acid biosynthesis. The sequence is that of Acyl carrier protein from Geotalea uraniireducens (strain Rf4) (Geobacter uraniireducens).